A 179-amino-acid polypeptide reads, in one-letter code: Lebocin-1/2 (179 aa).

An N-terminal signal peptide occupies residues 1–16; the sequence is MYKFLVFSSVLVLFFA. A propeptide spanning residues 17–120 is cleaved from the precursor; sequence QASCQRFIQP…QPIESHRNTR (104 aa). The interval 93–116 is disordered; it reads NNEASIEHSHHTVDTGLDQPIESH. Residue Thr-135 is glycosylated (O-linked (GalNAc...) threonine). The propeptide occupies 153–179; it reads RRHASDDQEELRQYNEHFLIPRDIFQE.

It belongs to the lebocin family. O-glycosylation is important for the antibacterial activity of lebocin, O-linked glycan structure is a disaccharide (Gal-GalNAc) in case of lebocin 1 and a monosaccharide (GalNAc) in case of lebocin 2. As to expression, hemolymph. Produced in fat body.

The protein resides in the secreted. Functionally, antibacterial peptide. In Bombyx mori (Silk moth), this protein is Lebocin-1/2.